Reading from the N-terminus, the 178-residue chain is Twist-related protein (178 aa).

The region spanning 20 to 71 (QQRACANRRERQRTKELNDAFTLLRKLIPSMPSDKMSKIHTLRIATDYISFL) is the bHLH domain.

In terms of assembly, efficient DNA binding requires dimerization with another bHLH protein. Homodimer. Forms a heterodimer with hlh-2. In terms of tissue distribution, expressed in defecation-associated muscles and neuron-like cells in the head at the L1 stage. In later larvae, expressed in SM cells and their descendants. Not expressed in differentiated body wall or sex muscles.

Its subcellular location is the nucleus. Functionally, acts as a transcriptional regulator. Involved in postembryonic mesodermal cell fate specification. Activates ceh-24 and egl-15 during mesodermal patterning. The polypeptide is Twist-related protein (hlh-8) (Caenorhabditis elegans).